Consider the following 593-residue polypeptide: Proline dehydrogenase 1, mitochondrial (593 aa).

Residues 24-44 are disordered; sequence PAAREQPAAGPGAEPVCGPAE. Residues Lys-368 and Lys-479 each carry the N6-acetyllysine modification.

The protein belongs to the proline oxidase family. FAD serves as cofactor.

Its subcellular location is the mitochondrion matrix. The catalysed reaction is L-proline + a quinone = (S)-1-pyrroline-5-carboxylate + a quinol + H(+). It functions in the pathway amino-acid degradation; L-proline degradation into L-glutamate; L-glutamate from L-proline: step 1/2. In terms of biological role, converts proline to delta-1-pyrroline-5-carboxylate. The chain is Proline dehydrogenase 1, mitochondrial from Bos taurus (Bovine).